Consider the following 335-residue polypeptide: MWFSVNKNKKAAIWATGSYLPEKVLSNADLEKMVDTSDEWIVTRTGIKERRIAGPQEYTSLMGAIAAEKAIANAGLSKDQIDCIIFSTAAPDYIFPSSGALAQAHLGIEDVPTFDCQAACTGYLYGLSVAKAYVESGTYNHVLLIAADKLSSFVDYTDRNTCVLFGDGGAACVIGESRPGSLEINRLSLGADGKLGELLSLPAGGSRCPASKETLQSGKHFIAMEGKEVFKHAVRRMETAAKHSIALAGIQEEDIDWFVPHQANERIIDALAKRFEIDESRVFKSVHKYGNTAASSVGIALDELVHTESIKLDDYLLLVAFGGGLSWGAVVLKQV.

Active-site residues include C120 and H261. The segment at 262–266 (QANER) is ACP-binding. The active site involves N291.

The protein belongs to the thiolase-like superfamily. FabH family. As to quaternary structure, homodimer.

The protein resides in the cytoplasm. The catalysed reaction is malonyl-[ACP] + acetyl-CoA + H(+) = 3-oxobutanoyl-[ACP] + CO2 + CoA. Its pathway is lipid metabolism; fatty acid biosynthesis. In terms of biological role, catalyzes the condensation reaction of fatty acid synthesis by the addition to an acyl acceptor of two carbons from malonyl-ACP. Catalyzes the first condensation reaction which initiates fatty acid synthesis and may therefore play a role in governing the total rate of fatty acid production. Possesses both acetoacetyl-ACP synthase and acetyl transacylase activities. Its substrate specificity determines the biosynthesis of branched-chain and/or straight-chain of fatty acids. The sequence is that of Beta-ketoacyl-[acyl-carrier-protein] synthase III from Chlamydia pneumoniae (Chlamydophila pneumoniae).